Reading from the N-terminus, the 29-residue chain is Dander allergen Equ c 2.0101 (29 aa).

This sequence belongs to the calycin superfamily. Lipocalin family.

The protein localises to the secreted. The polypeptide is Dander allergen Equ c 2.0101 (Equus caballus (Horse)).